Here is a 368-residue protein sequence, read N- to C-terminus: Terpene cyclase penA (368 aa).

6 helical membrane passes run 10 to 30 (IILASVAIYTKYYLSFQNGFI), 81 to 101 (LSLYAIAFAGSMIPMWLILLM), 118 to 138 (LTGLLVQGIGPGVMMCVLLAM), 192 to 212 (LFIASWQGWPLYIALAVGIAH), 233 to 253 (FALACSIISHVGLLLISFLSI), and 334 to 354 (LATMSLAFGPCSVALALYWTA).

Belongs to the membrane-bound ascI terpene cyclase family.

The protein localises to the membrane. Its pathway is secondary metabolite biosynthesis. In terms of biological role, part of the gene cluster that mediates the biosynthesis of the indole diterpenes penitrems. The geranylgeranyl diphosphate (GGPP) synthase penG catalyzes the first step in penitrem biosynthesis via conversion of farnesyl pyrophosphate and isopentyl pyrophosphate into geranylgeranyl pyrophosphate (GGPP). Condensation of indole-3-glycerol phosphate with GGPP by the prenyl transferase penC then forms 3-geranylgeranylindole (3-GGI). Epoxidation by the FAD-dependent monooxygenase penM leads to a epoxidized-GGI that is substrate of the terpene cyclase penB for cyclization to yield paspaline. Paspaline is subsequently converted to 13-desoxypaxilline by the cytochrome P450 monooxygenase penP, the latter being then converted to paxilline by the cytochrome P450 monooxygenase penQ. Paxilline is converted to beta-paxitriol via C-10 ketoreduction by the short-chain dehydrogenase PC-15 which can be monoprenylated at the C-20 by the indole diterpene prenyltransferase penD. A two-step elimination (acetylation and elimination) process performed by the O-acetyltransferase PC-16 and the P.simplicissimum ptmI-ortholog not yet identified in P.crustosum, leads to the production of the prenylated form of penijanthine. The FAD-linked oxidoreductase ptmO then converts the prenylated form of penijanthine into PC-M5 which is in turn transformed into PC-M4 by the aromatic dimethylallyltransferase PC-22. A series of oxidation steps involving 4 cytochrome P450 monooxygenases (PC-21, PC-05, PC-23, PC-20) and a FAD-dependent monooxygenase (PC-14) are required for the transformation of PC-M4 to penitrems A and E. Synthesis of these final products is proposed to proceed via penitrems D and C (PC-21, PC-05, PC-14) and penitrems B and F (PC-21, PC-05, PC-14, PC-23). The protein is Terpene cyclase penA of Penicillium crustosum (Blue mold fungus).